The chain runs to 562 residues: NAD-dependent malic enzyme (562 aa).

Catalysis depends on Tyr-101, which acts as the Proton donor. Arg-154 is a binding site for NAD(+). The active-site Proton acceptor is Lys-172. A divalent metal cation is bound by residues Glu-243, Asp-244, and Asp-267. NAD(+)-binding residues include Asp-267 and Asn-415.

The protein belongs to the malic enzymes family. In terms of assembly, homotetramer. The cofactor is Mg(2+). Mn(2+) is required as a cofactor.

It catalyses the reaction (S)-malate + NAD(+) = pyruvate + CO2 + NADH. The catalysed reaction is oxaloacetate + H(+) = pyruvate + CO2. This Colwellia psychrerythraea (strain 34H / ATCC BAA-681) (Vibrio psychroerythus) protein is NAD-dependent malic enzyme.